We begin with the raw amino-acid sequence, 880 residues long: Leucine--tRNA ligase (880 aa).

A 'HIGH' region motif is present at residues 46–56 (PYPSGALHMGH). The interval 483 to 502 (SPIKTEPTWRQTTCPDCGGP) is disordered. Residues 638–642 (KMSKS) carry the 'KMSKS' region motif. Lysine 641 contributes to the ATP binding site.

Belongs to the class-I aminoacyl-tRNA synthetase family.

It localises to the cytoplasm. The catalysed reaction is tRNA(Leu) + L-leucine + ATP = L-leucyl-tRNA(Leu) + AMP + diphosphate. This Xanthomonas oryzae pv. oryzae (strain PXO99A) protein is Leucine--tRNA ligase.